The sequence spans 551 residues: 2-(3-amino-3-carboxypropyl)histidine synthase subunit 2 (551 aa).

The [4Fe-4S] cluster site is built by cysteine 116, cysteine 137, and cysteine 371.

It belongs to the DPH1/DPH2 family. DPH2 subfamily. Component of the 2-(3-amino-3-carboxypropyl)histidine synthase complex composed of DPH1, DPH2, DPH3 and a NADH-dependent reductase, predominantly CBR1. [4Fe-4S] cluster serves as cofactor.

The protein localises to the cytoplasm. The protein operates within protein modification; peptidyl-diphthamide biosynthesis. Its function is as follows. Required for the first step of diphthamide biosynthesis, a post-translational modification of histidine which occurs in elongation factor 2. DPH1 and DPH2 transfer a 3-amino-3-carboxypropyl (ACP) group from S-adenosyl-L-methionine (SAM) to a histidine residue, the reaction is assisted by a reduction system comprising DPH3 and a NADH-dependent reductase, predominantly CBR1. Facilitates the reduction of the catalytic iron-sulfur cluster found in the DPH1 subunit. The polypeptide is 2-(3-amino-3-carboxypropyl)histidine synthase subunit 2 (DPH2) (Candida glabrata (strain ATCC 2001 / BCRC 20586 / JCM 3761 / NBRC 0622 / NRRL Y-65 / CBS 138) (Yeast)).